The chain runs to 197 residues: Guanylate kinase (197 aa).

The residue at position 2 (S2) is an N-acetylserine. Residues 4–186 (PRPVVLSGPS…AYAELKEALS (183 aa)) enclose the Guanylate kinase-like domain. 14–19 (GAGKST) contributes to the ATP binding site. 37–51 (SHTTRNPRPGEENGK) is a binding site for substrate. Residues R44, R137, and R148 contribute to the active site. R137 lines the ATP pocket. 171 to 172 (ND) serves as a coordination point for ATP.

The protein belongs to the guanylate kinase family. Monomer. Interacts with RD3. Widely expressed.

The protein localises to the photoreceptor inner segment. Its subcellular location is the cytoplasm. It localises to the cytosol. It is found in the mitochondrion. It catalyses the reaction GMP + ATP = GDP + ADP. With respect to regulation, up-regulated by RD3. Catalyzes the phosphorylation of GMP to GDP. Essential enzyme for recycling GMP and indirectly, cyclic GMP (cGMP). Involved in the cGMP metabolism in photoreceptors. It may also have a role in the survival and growth progression of some tumors. In addition to its physiological role, GUK1 is essential for converting prodrugs used for the treatment of cancers and viral infections into their pharmacologically active metabolites, most notably acyclovir, ganciclovir, and 6-thioguanine and its closely related analog 6-mercaptopurine. The protein is Guanylate kinase of Homo sapiens (Human).